The primary structure comprises 73 residues: Translation initiation factor IF-1 (73 aa).

The 72-residue stretch at 1 to 72 folds into the S1-like domain; sequence MPKKDAIEVE…TRGRVTYRFK (72 aa).

Belongs to the IF-1 family. Component of the 30S ribosomal translation pre-initiation complex which assembles on the 30S ribosome in the order IF-2 and IF-3, IF-1 and N-formylmethionyl-tRNA(fMet); mRNA recruitment can occur at any time during PIC assembly.

The protein resides in the cytoplasm. In terms of biological role, one of the essential components for the initiation of protein synthesis. Stabilizes the binding of IF-2 and IF-3 on the 30S subunit to which N-formylmethionyl-tRNA(fMet) subsequently binds. Helps modulate mRNA selection, yielding the 30S pre-initiation complex (PIC). Upon addition of the 50S ribosomal subunit IF-1, IF-2 and IF-3 are released leaving the mature 70S translation initiation complex. In Dehalococcoides mccartyi (strain ATCC BAA-2266 / KCTC 15142 / 195) (Dehalococcoides ethenogenes (strain 195)), this protein is Translation initiation factor IF-1.